Reading from the N-terminus, the 305-residue chain is MELIFLGTSAGVPTRTRNVTAILLNLQHPTQSGLWLFDCGEGTQHQLLHTAFNPGKLDKIFISHLHGDHLFGLPGLLCSRSMSGIIQPLTIYGPQGIREFVETALRISGSWTDYPLEIVEIGAGEILDDGLRKVTAYPLEHPLECYGYRIEEHDKPGALNAQALKAAGVPPGPLFQELKAGKTIMLEDGRQINGADYLAAPVPGKALAIFGDTGPCDAALDLAKGVDVMVHEATLDITMEAKANSRGHSSTRQAATLAREAGVGKLIITHVSSRYDDKGCQHLLRECRSIFPATELANDFTVFNV.

Residues H64, H66, D68, H69, H141, D212, and H270 each coordinate Zn(2+). The active-site Proton acceptor is the D68.

This sequence belongs to the RNase Z family. RNase BN subfamily. In terms of assembly, homodimer. Requires Zn(2+) as cofactor.

Zinc phosphodiesterase, which has both exoribonuclease and endoribonuclease activities. This is Ribonuclease BN from Shigella boydii serotype 18 (strain CDC 3083-94 / BS512).